The sequence spans 415 residues: Esterase FrsA (415 aa).

The segment at 1–23 (MANRNLSESLFKPRQKHQETSTL) is disordered.

This sequence belongs to the FrsA family.

The enzyme catalyses a carboxylic ester + H2O = an alcohol + a carboxylate + H(+). Functionally, catalyzes the hydrolysis of esters. In Photorhabdus laumondii subsp. laumondii (strain DSM 15139 / CIP 105565 / TT01) (Photorhabdus luminescens subsp. laumondii), this protein is Esterase FrsA.